We begin with the raw amino-acid sequence, 250 residues long: UPF0246 protein cce_3295 (250 aa).

This sequence belongs to the UPF0246 family.

This chain is UPF0246 protein cce_3295, found in Crocosphaera subtropica (strain ATCC 51142 / BH68) (Cyanothece sp. (strain ATCC 51142)).